The primary structure comprises 28 residues: Potassium channel toxin alpha-KTx 9.10 (28 aa).

Intrachain disulfides connect C3–C19, C6–C24, and C10–C26.

The protein belongs to the short scorpion toxin superfamily. Potassium channel inhibitor family. Alpha-KTx 09 subfamily. As to expression, expressed by the venom gland.

The protein localises to the secreted. Blocks Shaker potassium channels. The chain is Potassium channel toxin alpha-KTx 9.10 from Mesobuthus eupeus (Lesser Asian scorpion).